A 220-amino-acid polypeptide reads, in one-letter code: Charged multivesicular body protein 4b (220 aa).

Disordered stretches follow at residues 1–22 (MSLFGKMFGSGGKGGKSASPQE) and 180–220 (EIGD…WAAN). Coiled-coil stretches lie at residues 21-88 (QEAI…STIE) and 123-181 (IDKV…LLEI).

Belongs to the SNF7 family. In terms of assembly, probable core component of the endosomal sorting required for transport complex III (ESCRT-III). ESCRT-III components are thought to multimerize to form a flat lattice on the perimeter membrane of the endosome.

The protein resides in the cytoplasm. It is found in the cytosol. The protein localises to the late endosome membrane. Its subcellular location is the midbody. Probable core component of the endosomal sorting required for transport complex III (ESCRT-III) which is involved in multivesicular bodies (MVBs) formation and sorting of endosomal cargo proteins into MVBs. MVBs contain intraluminal vesicles (ILVs) that are generated by invagination and scission from the limiting membrane of the endosome and mostly are delivered to lysosomes enabling degradation of membrane proteins, such as stimulated growth factor receptors, lysosomal enzymes and lipids. The protein is Charged multivesicular body protein 4b (chmp4b) of Danio rerio (Zebrafish).